The following is a 53-amino-acid chain: Antitoxin RelB3 (53 aa).

Forms heterodimers with RelE and possibly a heterotetramer RelE3-RelB3(2)-RelE3 from 2 heterodimers. The heterotetramer is probably not very stable in solution.

Functionally, antitoxin component of a type II toxin-antitoxin (TA) system. Probably neutralizes the toxic activity of cognate toxin RelE. The chain is Antitoxin RelB3 (relB3) from Methanocaldococcus jannaschii (strain ATCC 43067 / DSM 2661 / JAL-1 / JCM 10045 / NBRC 100440) (Methanococcus jannaschii).